A 304-amino-acid chain; its full sequence is Non-specific ribonucleoside hydrolase RihC (304 aa).

The active site involves His-233.

The protein belongs to the IUNH family. RihC subfamily.

In terms of biological role, hydrolyzes both purine and pyrimidine ribonucleosides with a broad-substrate specificity. The polypeptide is Non-specific ribonucleoside hydrolase RihC (Escherichia coli O139:H28 (strain E24377A / ETEC)).